We begin with the raw amino-acid sequence, 99 residues long: MSLSASDIARIASLARLQLASDESERMLSQINGFFDLVERMRSVDTAGVEPLAHPVAAVEDITLRLRDDVASEPDNREANQKSAPAVEAGLFLVPKVIE.

This sequence belongs to the GatC family. In terms of assembly, heterotrimer of A, B and C subunits.

It carries out the reaction L-glutamyl-tRNA(Gln) + L-glutamine + ATP + H2O = L-glutaminyl-tRNA(Gln) + L-glutamate + ADP + phosphate + H(+). The catalysed reaction is L-aspartyl-tRNA(Asn) + L-glutamine + ATP + H2O = L-asparaginyl-tRNA(Asn) + L-glutamate + ADP + phosphate + 2 H(+). Functionally, allows the formation of correctly charged Asn-tRNA(Asn) or Gln-tRNA(Gln) through the transamidation of misacylated Asp-tRNA(Asn) or Glu-tRNA(Gln) in organisms which lack either or both of asparaginyl-tRNA or glutaminyl-tRNA synthetases. The reaction takes place in the presence of glutamine and ATP through an activated phospho-Asp-tRNA(Asn) or phospho-Glu-tRNA(Gln). This is Aspartyl/glutamyl-tRNA(Asn/Gln) amidotransferase subunit C from Variovorax paradoxus (strain S110).